We begin with the raw amino-acid sequence, 259 residues long: Oxidase ustYb (259 aa).

A helical transmembrane segment spans residues 36–56 (IIYTSLAFVGFIEILFFGIFF). N-linked (GlcNAc...) asparagine glycosylation is found at N102 and N122. Short sequence motifs (HXXHC) lie at residues 147 to 151 (HQLHC) and 197 to 201 (HVDHC).

Belongs to the ustYa family.

It localises to the membrane. The protein operates within mycotoxin biosynthesis. Functionally, oxidase; part of the gene cluster that mediates the biosynthesis of the secondary metabolite ustiloxin B, an antimitotic tetrapeptide. First, ustA is processed by the subtilisin-like endoprotease Kex2 that is outside the ustiloxin B gene cluster, at the C-terminal side of Arg-Lys, after transfer to Golgi apparatus through the endoplasmic reticulum (ER). Cleavage by KEX2 generates 16 peptides YAIG-I to YAIG-XVI. To process the precursor peptide further, at least two peptidases are necessary to cleave the N-terminal and C-terminal sides of the Tyr-Ala-Ile-Gly core peptide which serves as backbone for the synthesis of ustiloxin B, through cyclization and modification of the tyrosine with a non-protein coding amino acid, norvaline. One of the two peptidases must be the serine peptidase ustP; and the other pepdidase is probably ustH. Macrocyclization of the core peptide derived from ustA requires the tyrosinase ustQ, as well as the homologous oxidases ustYa and ustYb, and leads to the production of the first cyclization product N-desmethylustiloxin F. For the formation of N-desmethylustiloxin F, three oxidation steps are required, hydroxylation at the benzylic position, hydroxylation at either the aromatic ring of Tyr or beta-position of Ile, and oxidative cyclization. UstQ may catalyze the oxidation of a phenol moiety, whereas the ustYa and ustYb are most likely responsible for the remaining two-step oxidations. N-desmethylustiloxin F is then methylated by ustM to yield ustiloxin F which in turn substrate of the cytochrome P450 monooxygenase ustC which catalyzes the formation of S-deoxyustiloxin H. The flavoprotein monooxygenases ustF1 and ustF2 then participate in the modification of the side chain of S-deoxyustiloxin H, leading to the synthesis of an oxime intermediate, via ustiloxin H. Finally, carboxylative dehydration performed by the cysteine desulfurase-like protein ustD yields ustiloxin B. This chain is Oxidase ustYb, found in Aspergillus flavus (strain ATCC 200026 / FGSC A1120 / IAM 13836 / NRRL 3357 / JCM 12722 / SRRC 167).